Reading from the N-terminus, the 636-residue chain is Topoisomerase I damage affected protein 7 (636 aa).

The segment covering 1–18 (MNSNSTIGRTTLGESDTI) has biased composition (polar residues). Disordered stretches follow at residues 1–33 (MNSNSTIGRTTLGESDTISLSFSEPSSSLNSRS), 87–109 (TLVSSTDSSSSSEQDTYSSQYDP), 246–271 (NKDTTFPSSSRNTSTSFYSSSLSSTN), 299–326 (PTSSSVSSSSSKVPSNRPSSSSSSDDTT), and 339–362 (QSTTSSSIPPTTQTPSTSTISTSP). Asparagine 4 carries N-linked (GlcNAc...) asparagine glycosylation. Composition is skewed to low complexity over residues 19–33 (SLSFSEPSSSLNSRS) and 87–108 (TLVSSTDSSSSSEQDTYSSQYD). N-linked (GlcNAc...) asparagine glycosylation is present at asparagine 257. The chain crosses the membrane as a helical span at residues 457-477 (IVGSVVGSVGGILICVLVVWF). Asparagine 492 is a glycosylation site (N-linked (GlcNAc...) asparagine). The span at 510-541 (QAKEASLQAQDSGSQQRNTETASANNPFSNEF) shows a compositional bias: polar residues. Residues 510–551 (QAKEASLQAQDSGSQQRNTETASANNPFSNEFNFKARGNPPP) are disordered. Residue lysine 512 forms a Glycyl lysine isopeptide (Lys-Gly) (interchain with G-Cter in ubiquitin) linkage. 3 N-linked (GlcNAc...) asparagine glycosylation sites follow: asparagine 557, asparagine 562, and asparagine 626. Serine 628 bears the Phosphoserine mark.

Belongs to the TDA7 family.

It is found in the vacuole membrane. This chain is Topoisomerase I damage affected protein 7 (TDA7), found in Saccharomyces cerevisiae (strain ATCC 204508 / S288c) (Baker's yeast).